The chain runs to 143 residues: Larval cuticle protein LCP-17 (143 aa).

The N-terminal stretch at 1–16 (MKFLIVLAVAVACASA) is a signal peptide. In terms of domain architecture, Chitin-binding type R&amp;R spans 41 to 110 (EGHFQFNYET…PQGSHLPTPH (70 aa)).

Its function is as follows. Component of the cuticle of the larva of Bombyx mori. The chain is Larval cuticle protein LCP-17 (LCP17) from Bombyx mori (Silk moth).